Reading from the N-terminus, the 692-residue chain is Small conductance calcium-activated potassium channel-like protein 3 (692 aa).

A helical transmembrane segment spans residues Ser-270–Glu-290. A helical membrane pass occupies residues Thr-313–Val-333. Residues Val-349–Glu-369 form a helical membrane-spanning segment. Residues Val-401–His-421 traverse the membrane as a helical segment. The helical transmembrane segment at Pro-455–Val-475 threads the bilayer. The segment at residues Tyr-492 to Val-512 is an intramembrane region (pore-forming). A helical membrane pass occupies residues Phe-520–Ile-540. Positions His-667–Val-683 are enriched in polar residues. The segment at His-667–Phe-692 is disordered.

It belongs to the potassium channel KCNN family. SK subfamily. As to quaternary structure, heterooligomer.

It is found in the membrane. In terms of biological role, forms a voltage-independent potassium channel activated by intracellular calcium. The protein is Small conductance calcium-activated potassium channel-like protein 3 (kcnl-3) of Caenorhabditis elegans.